Here is a 324-residue protein sequence, read N- to C-terminus: DNA-directed RNA polymerase subunit alpha (324 aa).

Residues 1-228 (MIEIQKPTIR…EHFNLFTDLS (228 aa)) form an alpha N-terminal domain (alpha-NTD) region. Residues 245–324 (RNKLLDMTIE…STPKGEEEEK (80 aa)) form an alpha C-terminal domain (alpha-CTD) region.

The protein belongs to the RNA polymerase alpha chain family. In terms of assembly, homodimer. The RNAP catalytic core consists of 2 alpha, 1 beta, 1 beta' and 1 omega subunit. When a sigma factor is associated with the core the holoenzyme is formed, which can initiate transcription.

The enzyme catalyses RNA(n) + a ribonucleoside 5'-triphosphate = RNA(n+1) + diphosphate. Its function is as follows. DNA-dependent RNA polymerase catalyzes the transcription of DNA into RNA using the four ribonucleoside triphosphates as substrates. The sequence is that of DNA-directed RNA polymerase subunit alpha from Caldicellulosiruptor saccharolyticus (strain ATCC 43494 / DSM 8903 / Tp8T 6331).